We begin with the raw amino-acid sequence, 132 residues long: Large-conductance mechanosensitive channel (132 aa).

The next 3 membrane-spanning stretches (helical) occupy residues 14–34 (VIDLAVGVVIGAAFGKIVSSL), 38–58 (IITPLLGMVLGGVDFTGLKIT), and 69–89 (FIQTIFDFLIIAAAIFMFVKV).

It belongs to the MscL family. As to quaternary structure, homopentamer.

The protein localises to the cell membrane. In terms of biological role, channel that opens in response to stretch forces in the membrane lipid bilayer. May participate in the regulation of osmotic pressure changes within the cell. This Bacillus thuringiensis (strain Al Hakam) protein is Large-conductance mechanosensitive channel.